The chain runs to 425 residues: Alpha-(1,3)-fucosyltransferase C (425 aa).

The Cytoplasmic segment spans residues 1 to 37; it reads MYLGRVHCSFEVPGLLSGRVGHMSMAVRSVRLACGPR. The helical; Signal-anchor for type II membrane protein transmembrane segment at 38 to 58 threads the bilayer; the sequence is GALLLLLLVLLGVLVVLHKVT. The Lumenal portion of the chain corresponds to 59–425; the sequence is QSPLLNQNKI…SCRLQSRIRL (367 aa). 2 N-linked (GlcNAc...) asparagine glycosylation sites follow: asparagine 187 and asparagine 230.

The protein belongs to the glycosyltransferase 10 family.

The protein resides in the golgi apparatus. It localises to the golgi stack membrane. It participates in protein modification; protein glycosylation. In Drosophila melanogaster (Fruit fly), this protein is Alpha-(1,3)-fucosyltransferase C (FucTC).